The sequence spans 373 residues: MRGISRLYWSLVLICFAFAPIVEASSVRLKELARIEGVRENSLFGYGLVVGLAGTGDTHRSKATLQSIANTLQQFGISLDSDEIASRNVAAVTLTAKLPPFANSGDMIDVNVSSMGDARSLVGGTLLLAPLKAVNGKIYAVAQGQVSVGGFSYDLNGNVVQKNHPTVGVIPSGASVERGLSTDLVGADGHINVILNQPDFTTASRIKNAINKTLGPGKARAVHAGKISVVAPAGEYDLVDYLTRIENSVIEPDRIATVVVNERTGTVVAGGDVTIDNVTISHGNIKVVISTDYQVSQPVFVREPGRGVSTVVVPDTSIDIEESVAEPVRLSSGASIADLVTALRQIKTSTRDVITILQLIKTAGALHAQLVIQ.

Positions 1 to 24 (MRGISRLYWSLVLICFAFAPIVEA) are cleaved as a signal peptide.

It belongs to the FlgI family. The basal body constitutes a major portion of the flagellar organelle and consists of four rings (L,P,S, and M) mounted on a central rod.

It localises to the periplasm. The protein resides in the bacterial flagellum basal body. Functionally, assembles around the rod to form the L-ring and probably protects the motor/basal body from shearing forces during rotation. The protein is Flagellar P-ring protein 1 of Hahella chejuensis (strain KCTC 2396).